Consider the following 79-residue polypeptide: Neurotoxin 3FTx-LI (79 aa).

Positions 1–21 (MKTLLLTLVVVTIVCLDLGYT) are cleaved as a signal peptide. 4 disulfides stabilise this stretch: C24–C43, C36–C61, C65–C71, and C72–C77.

Expressed by the venom gland.

Its subcellular location is the secreted. Functionally, blocks both the muscle-twitch response to nerve stimulation and the response to exogenous acetylcholine. The chain is Neurotoxin 3FTx-LI from Bungarus fasciatus (Banded krait).